Consider the following 330-residue polypeptide: Reaction center protein M chain (330 aa).

Transmembrane regions (helical) follow at residues 57–83 (GWTSIVAFGTGIAWFVIVGFNMLAQVG), 115–144 (GGWYIIASFFLLVSVMTWLLRAYLLAEQHK), and 147–172 (KHIFWGFAAAVWLFLVLGLFRPILMG). (7R,8Z)-bacteriochlorophyll b is bound by residues histidine 185 and histidine 205. The chain crosses the membrane as a helical span at residues 202 to 230 (NPFHCLSIVFLYGSVLLFCMHGGTILAVT). Residues histidine 222 and glutamate 237 each coordinate Fe cation. Tryptophan 255 contributes to the a ubiquinone binding site. The helical transmembrane segment at 264–290 (TMEGIHRWAWWFAVLTPITGGIGILLT) threads the bilayer. Histidine 269 lines the Fe cation pocket.

This sequence belongs to the reaction center PufL/M/PsbA/D family. As to quaternary structure, reaction center is composed of four bacteriochlorophylls, two bacteriopheophytins, two ubiquinones, one iron, and two highly hydrophobic polypeptide chains (designated L and M).

The protein localises to the cellular chromatophore membrane. Functionally, the reaction center is a membrane-bound complex that mediates the initial photochemical event in the electron transfer process of photosynthesis. This chain is Reaction center protein M chain (pufM), found in Roseobacter denitrificans (strain ATCC 33942 / OCh 114) (Erythrobacter sp. (strain OCh 114)).